The chain runs to 581 residues: Intermediate filament protein ifa-3 (581 aa).

A disordered region spans residues 1–33; that stretch reads MADPDSYRSSITSRPAFNRTVTSSTQNYGTPAS. Residues 1–74 form a head region; sequence MADPDSYRSS…RDDREREKKE (74 aa). Over residues 7–33 the composition is skewed to polar residues; sequence YRSSITSRPAFNRTVTSSTQNYGTPAS. Positions 71 to 424 constitute an IF rod domain; sequence EKKEITELND…RMLEGNSEEN (354 aa). The interval 75-106 is coil 1A; sequence ITELNDRLASYIGKVRFLAAQNRKLEADLNVL. The tract at residues 107–120 is linker 1; the sequence is QSRFGKSTGSVKIM. Positions 121–258 are coil 1B; sequence YEMEITTATN…RGFETELKDL (138 aa). The tract at residues 259 to 276 is linker 12; that stretch reads QAQAARDTTSENREYFKN. Residues 277–424 are coil 2; sequence ELMNSIRDIR…RMLEGNSEEN (148 aa). Residues 425–578 form a tail region; that stretch reads GLRQLVEKVV…THMQRQSQQT (154 aa). Residues 457–574 form the LTD domain; it reads SRTSYQRSAK…EERATHMQRQ (118 aa).

Belongs to the intermediate filament family. In terms of assembly, forms some heteromeric filaments with ifb-1. In terms of tissue distribution, expressed in the embryonic and larval hypodermis. Also expressed in the ventral nerve cord of larvae.

It localises to the cytoplasm. Functionally, cytoplasmic intermediate filaments provide mechanical strength to cells. Essential protein, involved in attachment structures in epidermal cells that connect muscles to the external cuticle. Required for epidermal morphogenesis in embryos. Probable component of embryonic epidermal attachment structures. This Caenorhabditis elegans protein is Intermediate filament protein ifa-3 (ifa-3).